The primary structure comprises 567 residues: MEYDYIIIGAGSAGNVLAARLTEDADVTVLLLEAGGPDYRLDFRTQMPAALAFPLQGKRYNWAYETDPEPHMNNRRMECGRGKGLGGSSLINGMCYIRGNAMDFDHWASLSGLEDWSYLDCLPYFRKAETRDVGPNDFHGGEGPVSVTTPKIDNNPLFHAMVAAGVQAGYPRTDDLNGYQQEGFGPMDRTVTPKGRRASTARGYLDQARPRNNLTIITHALTDRILFEGKRATGVSYLKGDAGTGQTAHARREVLLCGGAIASPQILQRSGIGPAELLQRLDIPLVQALPGVGENLQDHLEMYLQYSCKQPVSLYPALLWFNQPKIGIEWLFNGTGVGASNQFEAGGFIRSRDAFTWPNIQYHFLPVAINYNGSNAVKEHGFQAHVGSMRSPSRGRIQVKSKDPRQHPSILFNYMSNEQDWHEFRDAIRITREIIAQPALDPYRGREISPGANVQSDDELDAFIREHAETAYHPSCSCKMGDDKMAVVDGQGRVHGVQGLRVVDASIMPQIITGNLNATTIMIAEKIADRIRGCQPLAKSNAAYFIAGDTPARTSPVRHSLPVTSYP.

4–33 is an FAD binding site; it reads DYIIIGAGSAGNVLAARLTEDADVTVLLLE. Histidine 473 (proton acceptor) is an active-site residue.

This sequence belongs to the GMC oxidoreductase family. The cofactor is FAD.

It carries out the reaction choline + A = betaine aldehyde + AH2. It catalyses the reaction betaine aldehyde + NAD(+) + H2O = glycine betaine + NADH + 2 H(+). It participates in amine and polyamine biosynthesis; betaine biosynthesis via choline pathway; betaine aldehyde from choline (cytochrome c reductase route): step 1/1. Its function is as follows. Involved in the biosynthesis of the osmoprotectant glycine betaine. Catalyzes the oxidation of choline to betaine aldehyde and betaine aldehyde to glycine betaine at the same rate. The sequence is that of Oxygen-dependent choline dehydrogenase from Yersinia pseudotuberculosis serotype IB (strain PB1/+).